The chain runs to 290 residues: Protease HtpX (290 aa).

The next 2 helical transmembrane spans lie at I12 to A32 and A42 to S62. H147 is a Zn(2+) binding site. E148 is a catalytic residue. H151 provides a ligand contact to Zn(2+). 2 helical membrane-spanning segments follow: residues L162–V182 and F197–M217. E224 is a binding site for Zn(2+).

The protein belongs to the peptidase M48B family. Requires Zn(2+) as cofactor.

The protein resides in the cell inner membrane. This is Protease HtpX from Pseudoalteromonas atlantica (strain T6c / ATCC BAA-1087).